Consider the following 235-residue polypeptide: Ubiquinone/menaquinone biosynthesis C-methyltransferase UbiE (235 aa).

3 residues coordinate S-adenosyl-L-methionine: threonine 60, aspartate 81, and serine 126.

Belongs to the class I-like SAM-binding methyltransferase superfamily. MenG/UbiE family.

The enzyme catalyses a 2-demethylmenaquinol + S-adenosyl-L-methionine = a menaquinol + S-adenosyl-L-homocysteine + H(+). It catalyses the reaction a 2-methoxy-6-(all-trans-polyprenyl)benzene-1,4-diol + S-adenosyl-L-methionine = a 5-methoxy-2-methyl-3-(all-trans-polyprenyl)benzene-1,4-diol + S-adenosyl-L-homocysteine + H(+). It functions in the pathway quinol/quinone metabolism; menaquinone biosynthesis; menaquinol from 1,4-dihydroxy-2-naphthoate: step 2/2. The protein operates within cofactor biosynthesis; ubiquinone biosynthesis. Methyltransferase required for the conversion of demethylmenaquinol (DMKH2) to menaquinol (MKH2) and the conversion of 2-polyprenyl-6-methoxy-1,4-benzoquinol (DDMQH2) to 2-polyprenyl-3-methyl-6-methoxy-1,4-benzoquinol (DMQH2). In Citrifermentans bemidjiense (strain ATCC BAA-1014 / DSM 16622 / JCM 12645 / Bem) (Geobacter bemidjiensis), this protein is Ubiquinone/menaquinone biosynthesis C-methyltransferase UbiE.